The sequence spans 163 residues: Nucleotide-binding protein YajQ (163 aa).

The protein belongs to the YajQ family.

In terms of biological role, nucleotide-binding protein. This Salmonella agona (strain SL483) protein is Nucleotide-binding protein YajQ.